A 1241-amino-acid chain; its full sequence is DNA-directed RNA polymerase subunit beta (1241 aa).

The disordered stretch occupies residues 1201 to 1224 (AEEEQDTDVDYITEDDFESPDPEI).

This sequence belongs to the RNA polymerase beta chain family. As to quaternary structure, the RNAP catalytic core consists of 2 alpha, 1 beta, 1 beta' and 1 omega subunit. When a sigma factor is associated with the core the holoenzyme is formed, which can initiate transcription.

It carries out the reaction RNA(n) + a ribonucleoside 5'-triphosphate = RNA(n+1) + diphosphate. In terms of biological role, DNA-dependent RNA polymerase catalyzes the transcription of DNA into RNA using the four ribonucleoside triphosphates as substrates. The chain is DNA-directed RNA polymerase subunit beta from Alkaliphilus oremlandii (strain OhILAs) (Clostridium oremlandii (strain OhILAs)).